A 99-amino-acid polypeptide reads, in one-letter code: Aspartyl/glutamyl-tRNA(Asn/Gln) amidotransferase subunit C (99 aa).

The protein belongs to the GatC family. In terms of assembly, heterotrimer of A, B and C subunits.

The catalysed reaction is L-glutamyl-tRNA(Gln) + L-glutamine + ATP + H2O = L-glutaminyl-tRNA(Gln) + L-glutamate + ADP + phosphate + H(+). It carries out the reaction L-aspartyl-tRNA(Asn) + L-glutamine + ATP + H2O = L-asparaginyl-tRNA(Asn) + L-glutamate + ADP + phosphate + 2 H(+). Allows the formation of correctly charged Asn-tRNA(Asn) or Gln-tRNA(Gln) through the transamidation of misacylated Asp-tRNA(Asn) or Glu-tRNA(Gln) in organisms which lack either or both of asparaginyl-tRNA or glutaminyl-tRNA synthetases. The reaction takes place in the presence of glutamine and ATP through an activated phospho-Asp-tRNA(Asn) or phospho-Glu-tRNA(Gln). This chain is Aspartyl/glutamyl-tRNA(Asn/Gln) amidotransferase subunit C, found in Polaromonas naphthalenivorans (strain CJ2).